A 397-amino-acid chain; its full sequence is Probable sugar efflux transporter (397 aa).

A run of 12 helical transmembrane segments spans residues 15-35 (VVTLAIAAFIFNTTEFVPVGL), 50-70 (VGIMLTIYAWVVALMSLPFML), 81-101 (LICLFVLFIASHVLSFLAWNF), 103-123 (VLVISRIGIAFAHAVFWSITA), 136-156 (AQALSLIATGTALAMVLGLPI), 169-189 (TFFAIGIGALITLVCLIKLLP), 209-229 (PALMSIYLLTVVVVTAHYTAY), 246-266 (FATVLLLILGGAGIIGSVVFG), 275-295 (PLISIAIMLLVICLMLLLPAA), 301-321 (LAVLSIFWGIAIMVIGLGMQV), 333-353 (VAMALFSGIFNIGIGAGALVG), and 364-384 (TIGYVGAVPALAALVWSIIIF).

It belongs to the major facilitator superfamily. SotB (TC 2.A.1.2) family.

The protein localises to the cell inner membrane. In terms of biological role, involved in the efflux of sugars. The physiological role may be the reduction of the intracellular concentration of toxic sugars or sugar metabolites. This Citrobacter koseri (strain ATCC BAA-895 / CDC 4225-83 / SGSC4696) protein is Probable sugar efflux transporter.